The following is a 73-amino-acid chain: RNA-binding protein Hfq (73 aa).

The 61-residue stretch at 8–68 (DQFLNQIRKD…ISTFAPQKNV (61 aa)) folds into the Sm domain.

It belongs to the Hfq family. In terms of assembly, homohexamer.

Functionally, RNA chaperone that binds small regulatory RNA (sRNAs) and mRNAs to facilitate mRNA translational regulation in response to envelope stress, environmental stress and changes in metabolite concentrations. Also binds with high specificity to tRNAs. The polypeptide is RNA-binding protein Hfq (Bacillus velezensis (strain DSM 23117 / BGSC 10A6 / LMG 26770 / FZB42) (Bacillus amyloliquefaciens subsp. plantarum)).